Reading from the N-terminus, the 73-residue chain is Homeodomain-only protein (73 aa).

Positions 3-62 (TEKSVTPTEEQLEILEYNFCKVNKHPDPTTLCLIAAETGLSEEQTLKWFKQRLAEWRKSE) form a DNA-binding region, homeobox; degenerate.

It is found in the nucleus. The protein resides in the cytoplasm. Its function is as follows. Atypical homeodomain protein which does not bind DNA and is required to modulate cardiac growth and development. May act via an interaction with SRF, leading to modulate the expression of SRF-dependent cardiac-specific genes and cardiac development. May act as a co-chaperone for HSPA1A and HSPA1B chaperone proteins and assist in chaperone-mediated protein refolding. This is Homeodomain-only protein (HOPX) from Gallus gallus (Chicken).